The sequence spans 367 residues: DNA replication and repair protein RecF (367 aa).

Residue 30 to 37 (GANGSGKT) participates in ATP binding.

This sequence belongs to the RecF family.

It localises to the cytoplasm. Functionally, the RecF protein is involved in DNA metabolism; it is required for DNA replication and normal SOS inducibility. RecF binds preferentially to single-stranded, linear DNA. It also seems to bind ATP. The polypeptide is DNA replication and repair protein RecF (Pseudomonas putida (strain ATCC 47054 / DSM 6125 / CFBP 8728 / NCIMB 11950 / KT2440)).